The chain runs to 687 residues: Glycine--tRNA ligase beta subunit (687 aa).

The protein belongs to the class-II aminoacyl-tRNA synthetase family. In terms of assembly, tetramer of two alpha and two beta subunits.

It is found in the cytoplasm. The enzyme catalyses tRNA(Gly) + glycine + ATP = glycyl-tRNA(Gly) + AMP + diphosphate. The sequence is that of Glycine--tRNA ligase beta subunit from Geobacter sp. (strain M21).